The following is a 65-amino-acid chain: Weak neurotoxin 6 (65 aa).

5 disulfides stabilise this stretch: Cys-3–Cys-24, Cys-6–Cys-11, Cys-17–Cys-42, Cys-46–Cys-57, and Cys-58–Cys-63.

The protein belongs to the three-finger toxin family. Ancestral subfamily. Orphan group II sub-subfamily. In terms of tissue distribution, expressed by the venom gland.

The protein localises to the secreted. Functionally, binds with low affinity to muscular (alpha-1-beta-1-delta-epsilon/CHRNA1-CHRNB1-CHRND-CHRNE) and very low affinity to neuronal (alpha-7/CHRNA7) nicotinic acetylcholine receptor (nAChR). The chain is Weak neurotoxin 6 from Naja naja (Indian cobra).